A 1001-amino-acid chain; its full sequence is Receptor-type tyrosine-protein phosphatase N2 (1001 aa).

The signal sequence occupies residues 1–27 (MGPPLPLLLLLLLPPPLPRALPAPASA). Residues 1–407 (MGPPLPLLLL…PEGPLLEKSS (407 aa)) are involved in localization to secretory granules; interaction with CPE. The Extracellular portion of the chain corresponds to 28–600 (RGRQLPGRLG…HQEEQEDSTK (573 aa)). R259 is modified (omega-N-methylarginine). Disordered stretches follow at residues 271-296 (PFSA…SMDD), 308-359 (QQNS…DAPE), and 394-459 (SPLL…LEDQ). Basic and acidic residues predominate over residues 312-325 (EVDRLGPLKEEKAD). The residue at position 339 (S339) is a Phosphoserine. The segment covering 340 to 355 (QESHGRGAEGQPREQT) has biased composition (basic and acidic residues). The span at 394–404 (SPLLPEGPLLE) shows a compositional bias: low complexity. Over residues 405-416 (KSSREEIKKSEQ) the composition is skewed to basic and acidic residues. The segment covering 417–428 (PEEVLSSEEETA) has biased composition (acidic residues). A phosphoserine mark is found at S422 and S423. Residues 429-459 (GVEHVRSRTYSKDLFERKPNSEPQPRRLEDQ) show a composition bias toward basic and acidic residues. A glycan (N-linked (GlcNAc...) asparagine) is linked at N550. A helical membrane pass occupies residues 601-621 (FILLTFLSIACILGVLLASSL). Over 622 to 1001 (AYCLRHNSHY…VNAILKALPQ (380 aa)) the chain is Cytoplasmic. The short motif at 652–661 (YQELCRQRMA) is the Tyrosine-based internalization motif element. Residues 663 to 705 (RPQDRSEGPHTSRINSVSSQFSDGPMPSPSARSSTSSWSEEPV) are disordered. Residues 674-684 (SRINSVSSQFS) show a composition bias toward polar residues. Phosphoserine occurs at positions 678 and 684. Low complexity predominate over residues 691–705 (PSARSSTSSWSEEPV). Residue T697 is modified to Phosphothreonine. The 261-residue stretch at 731–991 (LEKEWEALCA…EFALTAVAEE (261 aa)) folds into the Tyrosine-protein phosphatase domain. Substrate contacts are provided by residues D899 and 931 to 937 (CSDGAGR). C931 (phosphocysteine intermediate) is an active-site residue. Residue K956 is modified to N6-acetyllysine. Q976 lines the substrate pocket. Residues 990–996 (EEVNAIL) carry the Leucine-based sorting signal motif.

This sequence belongs to the protein-tyrosine phosphatase family. In terms of assembly, self-associates. Interacts (via cytoplasmic domain) with PTPRN (via cytoplasmic domain). Interacts (precursor form) with CPE. Interacts with HAP1 isoform A. Interacts with AP2A1 or AP2A2 and AP1G1; indicative for an association with adaptor protein complex 2 (AP-2) and adaptor protein complex 1 (AP-1). Interacts with AP2M1; indicative for an association with adaptor protein complex 2 (AP-2). Interacts with MYO5A. Post-translationally, subject to proteolytic cleavage at multiple sites during maturation of secretory granules. In the brain at least IA-2beta71, IA-2beta64 and IA-2beta60 have been detected, in the pancreas and a pancreatic beta cell line only IA-2beta60 has been detected. Detected in brain. Detected in pancreas islets (at protein level). Detected in pancreas and brain.

The protein resides in the cytoplasmic vesicle. Its subcellular location is the secretory vesicle membrane. It localises to the secretory vesicle. The protein localises to the synaptic vesicle membrane. It catalyses the reaction O-phospho-L-tyrosyl-[protein] + H2O = L-tyrosyl-[protein] + phosphate. In terms of biological role, plays a role in vesicle-mediated secretory processes. Required for normal accumulation of secretory vesicles in hippocampus, pituitary and pancreatic islets. Required for the accumulation of normal levels of insulin-containing vesicles and preventing their degradation. Plays a role in insulin secretion in response to glucose stimuli. Required for normal accumulation of the neurotransmitters norepinephrine, dopamine and serotonin in the brain. In females, but not in males, required for normal accumulation and secretion of pituitary hormones, such as luteinizing hormone (LH) and follicle-stimulating hormone (FSH). Required to maintain normal levels of renin expression and renin release. May regulate catalytic active protein-tyrosine phosphatases such as PTPRA through dimerization. Has phosphatidylinositol phosphatase activity; the PIPase activity is involved in its ability to regulate insulin secretion. Can dephosphorylate phosphatidylinositol 4,5-biphosphate (PI(4,5)P2), phosphatidylinositol 5-phosphate and phosphatidylinositol 3-phosphate. Regulates PI(4,5)P2 level in the plasma membrane and localization of cofilin at the plasma membrane and thus is indirectly involved in regulation of actin dynamics related to cell migration and metastasis; upon hydrolysis of PI(4,5)P2 cofilin is released from the plasma membrane and acts in the cytoplasm in severing F-actin filaments. The sequence is that of Receptor-type tyrosine-protein phosphatase N2 (Ptprn2) from Mus musculus (Mouse).